Reading from the N-terminus, the 62-residue chain is Photosystem II reaction center protein Z (62 aa).

Transmembrane regions (helical) follow at residues 8 to 28 and 41 to 61; these read AIFA…VVFA and FSGT…NSLI.

It belongs to the PsbZ family. In terms of assembly, PSII is composed of 1 copy each of membrane proteins PsbA, PsbB, PsbC, PsbD, PsbE, PsbF, PsbH, PsbI, PsbJ, PsbK, PsbL, PsbM, PsbT, PsbY, PsbZ, Psb30/Ycf12, at least 3 peripheral proteins of the oxygen-evolving complex and a large number of cofactors. It forms dimeric complexes.

It localises to the plastid. The protein localises to the chloroplast thylakoid membrane. Its function is as follows. May control the interaction of photosystem II (PSII) cores with the light-harvesting antenna, regulates electron flow through the 2 photosystem reaction centers. PSII is a light-driven water plastoquinone oxidoreductase, using light energy to abstract electrons from H(2)O, generating a proton gradient subsequently used for ATP formation. This is Photosystem II reaction center protein Z from Acorus gramineus (Dwarf sweet flag).